Here is a 449-residue protein sequence, read N- to C-terminus: uncharacterized protein (449 aa).

13 consecutive transmembrane segments (helical) span residues 1 to 21, 26 to 46, 51 to 71, 97 to 117, 137 to 157, 178 to 198, 223 to 243, 244 to 264, 285 to 305, 310 to 330, 340 to 360, 377 to 397, and 425 to 445; these read MVAN…ILLI, IHLT…HVIT, IDYI…MVLV, LLML…PNAT, FVPI…LTLV, FKLS…TPFL, VLMA…IGES, LPVP…ALLL, LIFF…GVTA, LLAV…VFTV, IPLV…IGFA, VLPL…GTLV, and GLPV…WLMF.

It belongs to the CitM (TC 2.A.11) transporter family.

The protein resides in the cell membrane. This is an uncharacterized protein from Synechocystis sp. (strain ATCC 27184 / PCC 6803 / Kazusa).